A 463-amino-acid chain; its full sequence is Glycine--tRNA ligase (463 aa).

2 residues coordinate substrate: Arg-98 and Glu-170. ATP contacts are provided by residues 202–204 (RNE), 212–217 (FRTREF), 287–288 (EL), and 331–334 (GIER). A substrate-binding site is contributed by 217 to 221 (FEQFE). 327-331 (EPSLG) lines the substrate pocket.

It belongs to the class-II aminoacyl-tRNA synthetase family. Homodimer.

The protein resides in the cytoplasm. It catalyses the reaction tRNA(Gly) + glycine + ATP = glycyl-tRNA(Gly) + AMP + diphosphate. In terms of biological role, catalyzes the attachment of glycine to tRNA(Gly). The sequence is that of Glycine--tRNA ligase from Mycoplasmoides gallisepticum (strain R(low / passage 15 / clone 2)) (Mycoplasma gallisepticum).